Reading from the N-terminus, the 266-residue chain is Small ribosomal subunit protein uS2 (266 aa).

This sequence belongs to the universal ribosomal protein uS2 family.

The sequence is that of Small ribosomal subunit protein uS2 from Paramagnetospirillum magneticum (strain ATCC 700264 / AMB-1) (Magnetospirillum magneticum).